The primary structure comprises 320 residues: Cytochrome c biogenesis protein CcsA (320 aa).

The next 8 helical transmembrane spans lie at 15–35 (FSIV…DEII), 43–63 (KGMI…WIYS), 71–91 (LYES…VPYF), 98–118 (LSTI…SGLL), 143–163 (MILS…LLVI), 224–244 (VISL…VWAN), 251–271 (WNWD…AIYL), and 285–305 (AIVA…VNLL).

It belongs to the CcmF/CycK/Ccl1/NrfE/CcsA family. May interact with Ccs1.

Its subcellular location is the plastid. The protein localises to the chloroplast thylakoid membrane. Functionally, required during biogenesis of c-type cytochromes (cytochrome c6 and cytochrome f) at the step of heme attachment. The sequence is that of Cytochrome c biogenesis protein CcsA from Panax ginseng (Korean ginseng).